The chain runs to 180 residues: Shikimate kinase (180 aa).

14–19 lines the ATP pocket; sequence GAGKSS. Mg(2+) is bound at residue Ser18. Substrate is bound by residues Asp36, Arg60, and Gly82. An ATP-binding site is contributed by Arg120. Arg139 serves as a coordination point for substrate.

The protein belongs to the shikimate kinase family. Monomer. Mg(2+) is required as a cofactor.

The protein resides in the cytoplasm. It carries out the reaction shikimate + ATP = 3-phosphoshikimate + ADP + H(+). Its pathway is metabolic intermediate biosynthesis; chorismate biosynthesis; chorismate from D-erythrose 4-phosphate and phosphoenolpyruvate: step 5/7. Catalyzes the specific phosphorylation of the 3-hydroxyl group of shikimic acid using ATP as a cosubstrate. The sequence is that of Shikimate kinase from Xylella fastidiosa (strain 9a5c).